Reading from the N-terminus, the 343-residue chain is Multidrug resistance protein MdtN (343 aa).

Topologically, residues 1–12 are cytoplasmic; that stretch reads MESTPKKAPRSK. A helical; Signal-anchor for type II membrane protein transmembrane segment spans residues 13–33; the sequence is FPALLVVALALVALVFVIWRV. The Periplasmic segment spans residues 34–343; it reads DSAPSTNDAY…ASAVANLEPQ (310 aa).

Belongs to the membrane fusion protein (MFP) (TC 8.A.1) family. As to quaternary structure, could be part of a tripartite efflux system composed of MdtN, MdtO and MdtP.

The protein localises to the cell inner membrane. Functionally, could be involved in resistance to puromycin, acriflavine and tetraphenylarsonium chloride. The chain is Multidrug resistance protein MdtN (mdtN) from Escherichia coli O157:H7.